Consider the following 368-residue polypeptide: Ribosomal RNA large subunit methyltransferase M (368 aa).

S-adenosyl-L-methionine is bound by residues Ser189, 222-225 (CPGG), Asp241, Asp261, and Asp278. Lys307 serves as the catalytic Proton acceptor.

This sequence belongs to the class I-like SAM-binding methyltransferase superfamily. RNA methyltransferase RlmE family. RlmM subfamily. In terms of assembly, monomer.

The protein localises to the cytoplasm. The catalysed reaction is cytidine(2498) in 23S rRNA + S-adenosyl-L-methionine = 2'-O-methylcytidine(2498) in 23S rRNA + S-adenosyl-L-homocysteine + H(+). In terms of biological role, catalyzes the 2'-O-methylation at nucleotide C2498 in 23S rRNA. The protein is Ribosomal RNA large subunit methyltransferase M of Yersinia pseudotuberculosis serotype O:1b (strain IP 31758).